The chain runs to 60 residues: Large ribosomal subunit protein bL32 (60 aa).

The disordered stretch occupies residues 1–60 (MAVQQNKKSPSKRGMHRSHDALTNPPLAIEPTTGETHLRHHISPNGFYRGKKVIKTKNDD). The span at 49-60 (RGKKVIKTKNDD) shows a compositional bias: basic residues.

The protein belongs to the bacterial ribosomal protein bL32 family.

The chain is Large ribosomal subunit protein bL32 from Nitrosomonas eutropha (strain DSM 101675 / C91 / Nm57).